A 122-amino-acid polypeptide reads, in one-letter code: UPF0102 protein VIBHAR_00890 (122 aa).

Belongs to the UPF0102 family.

This Vibrio campbellii (strain ATCC BAA-1116) protein is UPF0102 protein VIBHAR_00890.